The primary structure comprises 100 residues: uncharacterized protein (100 aa).

This is an uncharacterized protein from Borreliella burgdorferi (strain ATCC 35210 / DSM 4680 / CIP 102532 / B31) (Borrelia burgdorferi).